Reading from the N-terminus, the 246-residue chain is UDP-2,3-diacylglucosamine hydrolase (246 aa).

Positions 8, 10, 41, 79, and 114 each coordinate Mn(2+). Residue 79–80 participates in substrate binding; the sequence is NR. Substrate-binding residues include aspartate 122, lysine 164, lysine 167, and histidine 195. Residues histidine 195 and histidine 197 each coordinate Mn(2+).

Belongs to the LpxH family. Mn(2+) serves as cofactor.

The protein resides in the cell inner membrane. The enzyme catalyses UDP-2-N,3-O-bis[(3R)-3-hydroxytetradecanoyl]-alpha-D-glucosamine + H2O = 2-N,3-O-bis[(3R)-3-hydroxytetradecanoyl]-alpha-D-glucosaminyl 1-phosphate + UMP + 2 H(+). It participates in glycolipid biosynthesis; lipid IV(A) biosynthesis; lipid IV(A) from (3R)-3-hydroxytetradecanoyl-[acyl-carrier-protein] and UDP-N-acetyl-alpha-D-glucosamine: step 4/6. Hydrolyzes the pyrophosphate bond of UDP-2,3-diacylglucosamine to yield 2,3-diacylglucosamine 1-phosphate (lipid X) and UMP by catalyzing the attack of water at the alpha-P atom. Involved in the biosynthesis of lipid A, a phosphorylated glycolipid that anchors the lipopolysaccharide to the outer membrane of the cell. This is UDP-2,3-diacylglucosamine hydrolase from Vibrio cholerae serotype O1 (strain ATCC 39541 / Classical Ogawa 395 / O395).